The chain runs to 186 residues: MGDPKRPRKKYETPRHPWEAERLEYERKLMRKYGLRRKKELWRHQTQLKRWRERAKELMARTDPEAQREREALFRKLYDLGILDKKPEEATLDDILRLTVEDVLERRLQTIVYRKGLAKTPLQARQLVVHRHIAIGDRIVTVPSYLVSREEEEEVDYSPYSPLKDEDHPIRCEARGESPEETAAEE.

Residues 106–170 (RRLQTIVYRK…SPLKDEDHPI (65 aa)) form the S4 RNA-binding domain. The segment at 151–186 (EEEEVDYSPYSPLKDEDHPIRCEARGESPEETAAEE) is disordered. Residues 163–178 (LKDEDHPIRCEARGES) are compositionally biased toward basic and acidic residues.

It belongs to the universal ribosomal protein uS4 family. In terms of assembly, part of the 30S ribosomal subunit. Contacts protein S5. The interaction surface between S4 and S5 is involved in control of translational fidelity.

Its function is as follows. One of the primary rRNA binding proteins, it binds directly to 16S rRNA where it nucleates assembly of the body of the 30S subunit. With S5 and S12 plays an important role in translational accuracy. The protein is Small ribosomal subunit protein uS4 of Methanopyrus kandleri (strain AV19 / DSM 6324 / JCM 9639 / NBRC 100938).